Reading from the N-terminus, the 305-residue chain is UDP-3-O-acyl-N-acetylglucosamine deacetylase (305 aa).

His-78, His-237, and Asp-241 together coordinate Zn(2+). His-264 serves as the catalytic Proton donor.

It belongs to the LpxC family. It depends on Zn(2+) as a cofactor.

It catalyses the reaction a UDP-3-O-[(3R)-3-hydroxyacyl]-N-acetyl-alpha-D-glucosamine + H2O = a UDP-3-O-[(3R)-3-hydroxyacyl]-alpha-D-glucosamine + acetate. It participates in glycolipid biosynthesis; lipid IV(A) biosynthesis; lipid IV(A) from (3R)-3-hydroxytetradecanoyl-[acyl-carrier-protein] and UDP-N-acetyl-alpha-D-glucosamine: step 2/6. Its function is as follows. Catalyzes the hydrolysis of UDP-3-O-myristoyl-N-acetylglucosamine to form UDP-3-O-myristoylglucosamine and acetate, the committed step in lipid A biosynthesis. In Burkholderia ambifaria (strain MC40-6), this protein is UDP-3-O-acyl-N-acetylglucosamine deacetylase.